The following is a 395-amino-acid chain: MPDSCCFQMDSGVSEPGEQDLTEAGAEQELRWLDLGSEEALGAGTQGPSTPQAWGHLLQAVWKGHTGLVTQLLRQGASVEERDGAGRTPLHLAVLRGHVSLVRLLLQRGAQVGAADRAGRTPLHEAAWHGPSRVAELLLRRGAPANARCLAGLTPLHWAAALGRTLMVGHLLAAPHPGPTAADARGWTAGHWAAAGGQMAVLELLGANGGARLDSVLLVAAAAGRATALRLLLAQGAPVDARDGVGATVLGVAAGLGRRQDMEVLLEHGADPSLTDRHGRSALHRAAAGGHLLAVQLLAAWGAEVDSQDLLGLTPLHHAARGGHIEVTGHLLDRGAEINAAGWLHKTPLHLAMEHGHGPTAELLLSRGASPTLRTRWGDMAQDLWPALCGEQEES.

ANK repeat units lie at residues 52 to 81 (QAWG…SVEE), 85 to 114 (AGRT…QVGA), 118 to 147 (AGRT…PANA), 151 to 180 (AGLT…PGPT), 185 to 212 (RGWT…GGAR), 213 to 241 (LDSV…PVDA), 245 to 274 (VGAT…DPSL), 278 to 307 (HGRS…EVDS), 311 to 340 (LGLT…EINA), and 344 to 373 (LHKT…SPTL).

This Bos taurus (Bovine) protein is Ankyrin repeat domain-containing protein 65 (ANKRD65).